Here is a 339-residue protein sequence, read N- to C-terminus: MRVYYDRDADLNLIKGKKVVIIGYGSQGHAHALNLKDSGVKDVAIALRKGSTSAQKAEAAGFKVMEVAEAAKWADVMMMLTPDELQGDIYREHLHDNMKNGAALLFAHGLNVHFNLIEPRADLDVVMVAPKGPGHTVRSEYQRGGGVPCLIAVHKDSSGNAHDLGLSYASAIGGGRAGIIETTFREECETDLFGEQVVLCGGLVELIKGGFETLVEAGYAPEMAYFECLHEVKLIVDLIYEGGIANMNYSISNTAEYGEYVTGPRIVTPETKKEMKKVLEDIQNGIFTRNWMLENKVNQTSFKATRAKLAEHQIEEVGAKLRDMMPWIKKGALVDKSKN.

One can recognise a KARI N-terminal Rossmann domain in the interval 1–182; sequence MRVYYDRDAD…GGGRAGIIET (182 aa). NADP(+) is bound by residues 24 to 27, Arg48, Ser51, Ser53, and 83 to 86; these read YGSQ and DELQ. His108 is a catalytic residue. Gly134 lines the NADP(+) pocket. Positions 183 to 328 constitute a KARI C-terminal knotted domain; the sequence is TFREECETDL…AKLRDMMPWI (146 aa). Asp191, Glu195, Glu227, and Glu231 together coordinate Mg(2+). Ser252 is a substrate binding site.

The protein belongs to the ketol-acid reductoisomerase family. Requires Mg(2+) as cofactor.

It carries out the reaction (2R)-2,3-dihydroxy-3-methylbutanoate + NADP(+) = (2S)-2-acetolactate + NADPH + H(+). The catalysed reaction is (2R,3R)-2,3-dihydroxy-3-methylpentanoate + NADP(+) = (S)-2-ethyl-2-hydroxy-3-oxobutanoate + NADPH + H(+). It functions in the pathway amino-acid biosynthesis; L-isoleucine biosynthesis; L-isoleucine from 2-oxobutanoate: step 2/4. Its pathway is amino-acid biosynthesis; L-valine biosynthesis; L-valine from pyruvate: step 2/4. Functionally, involved in the biosynthesis of branched-chain amino acids (BCAA). Catalyzes an alkyl-migration followed by a ketol-acid reduction of (S)-2-acetolactate (S2AL) to yield (R)-2,3-dihydroxy-isovalerate. In the isomerase reaction, S2AL is rearranged via a Mg-dependent methyl migration to produce 3-hydroxy-3-methyl-2-ketobutyrate (HMKB). In the reductase reaction, this 2-ketoacid undergoes a metal-dependent reduction by NADPH to yield (R)-2,3-dihydroxy-isovalerate. This chain is Ketol-acid reductoisomerase (NADP(+)), found in Rhodopseudomonas palustris (strain BisB18).